The following is a 310-amino-acid chain: GMP synthase [glutamine-hydrolyzing] subunit B (310 aa).

The GMPS ATP-PPase domain maps to F2–R185. Residue S29 to A35 participates in ATP binding.

In terms of assembly, heterodimer composed of a glutamine amidotransferase subunit (A) and a GMP-binding subunit (B).

It catalyses the reaction XMP + L-glutamine + ATP + H2O = GMP + L-glutamate + AMP + diphosphate + 2 H(+). The protein operates within purine metabolism; GMP biosynthesis; GMP from XMP (L-Gln route): step 1/1. Catalyzes the synthesis of GMP from XMP. The polypeptide is GMP synthase [glutamine-hydrolyzing] subunit B (Methanococcus maripaludis (strain DSM 14266 / JCM 13030 / NBRC 101832 / S2 / LL)).